The following is a 326-amino-acid chain: Zinc transporter 11 (326 aa).

A signal peptide spans 1–20 (MSRSLVFFFLFLVLVVPCLS). At 21-49 (HGTGGDHDDDEASHVKSSDLKSKSLISVK) the chain is on the extracellular side. A helical transmembrane segment spans residues 50–70 (IACLVIIFVLTFISGVSPYFL). At 71 to 75 (KWSQG) the chain is on the cytoplasmic side. The helical transmembrane segment at 76 to 96 (FLVLGTQFAGGVFLATALMHF) threads the bilayer. Over 97–121 (LSDADETFRGLLTAEGESEPSPAYP) the chain is Extracellular. Residues 122 to 142 (FAYMLACAGFMLTMLADSVIA) traverse the membrane as a helical segment. Residues 143-174 (HIYSKTQNDLELQGEDKSNQRSATTETSIGDS) lie on the Cytoplasmic side of the membrane. A helical transmembrane segment spans residues 175-195 (ILLIVALCFHSVFEGIAIGIS). The Extracellular portion of the chain corresponds to 196 to 203 (ETKSDAWR). The helical transmembrane segment at 204 to 224 (ALWTITLHKIFAAIAMGIALL) threads the bilayer. The Cytoplasmic portion of the chain corresponds to 225–235 (RMIPDRPLFSS). A helical transmembrane segment spans residues 236-256 (ITYSFAFAISSPIGVAIGIVI). At 257–262 (DATTQG) the chain is on the extracellular side. A helical transmembrane segment spans residues 263-283 (SIADWIFALSMSLACGVFVYV). Topologically, residues 284–305 (SVNHLLAKGYRPNKKVHVDEPR) are cytoplasmic. The chain crosses the membrane as a helical span at residues 306–326 (YKFLAVLFGVVVIAIVMIWDT).

This sequence belongs to the ZIP transporter (TC 2.A.5) family.

Its subcellular location is the cell membrane. Its function is as follows. Probably mediates zinc uptake from the rhizosphere. The protein is Zinc transporter 11 (ZIP11) of Arabidopsis thaliana (Mouse-ear cress).